Consider the following 91-residue polypeptide: Small ribosomal subunit protein uS15 (91 aa).

The protein belongs to the universal ribosomal protein uS15 family. As to quaternary structure, part of the 30S ribosomal subunit. Forms a bridge to the 50S subunit in the 70S ribosome, contacting the 23S rRNA.

Functionally, one of the primary rRNA binding proteins, it binds directly to 16S rRNA where it helps nucleate assembly of the platform of the 30S subunit by binding and bridging several RNA helices of the 16S rRNA. Its function is as follows. Forms an intersubunit bridge (bridge B4) with the 23S rRNA of the 50S subunit in the ribosome. The sequence is that of Small ribosomal subunit protein uS15 from Cytophaga hutchinsonii (strain ATCC 33406 / DSM 1761 / CIP 103989 / NBRC 15051 / NCIMB 9469 / D465).